The following is a 358-amino-acid chain: Porphobilinogen deaminase, chloroplastic (358 aa).

A signal peptide spans 1 to 24 (MPPPPRCAATTAHHSLLGSPTCLA). Cys-290 carries the post-translational modification S-(dipyrrolylmethanemethyl)cysteine.

The protein belongs to the HMBS family. It depends on dipyrromethane as a cofactor.

It is found in the plastid. The protein localises to the chloroplast. The catalysed reaction is 4 porphobilinogen + H2O = hydroxymethylbilane + 4 NH4(+). It functions in the pathway porphyrin-containing compound metabolism; protoporphyrin-IX biosynthesis; coproporphyrinogen-III from 5-aminolevulinate: step 2/4. Its pathway is porphyrin-containing compound metabolism; chlorophyll biosynthesis. Tetrapolymerization of the monopyrrole PBG into the hydroxymethylbilane pre-uroporphyrinogen in several discrete steps. This Oryza sativa subsp. japonica (Rice) protein is Porphobilinogen deaminase, chloroplastic (HEMC).